Here is a 290-residue protein sequence, read N- to C-terminus: Bifunctional protein FolD (290 aa).

Residues 166 to 168 and I232 each bind NADP(+); that span reads GAS.

Belongs to the tetrahydrofolate dehydrogenase/cyclohydrolase family. As to quaternary structure, homodimer.

It catalyses the reaction (6R)-5,10-methylene-5,6,7,8-tetrahydrofolate + NADP(+) = (6R)-5,10-methenyltetrahydrofolate + NADPH. The catalysed reaction is (6R)-5,10-methenyltetrahydrofolate + H2O = (6R)-10-formyltetrahydrofolate + H(+). It functions in the pathway one-carbon metabolism; tetrahydrofolate interconversion. Its function is as follows. Catalyzes the oxidation of 5,10-methylenetetrahydrofolate to 5,10-methenyltetrahydrofolate and then the hydrolysis of 5,10-methenyltetrahydrofolate to 10-formyltetrahydrofolate. The sequence is that of Bifunctional protein FolD from Proteus mirabilis (strain HI4320).